The sequence spans 179 residues: CASP-like protein 5A2 (179 aa).

Residues 1 to 54 (MEATSHPAVHPVAVPPQFQGAGPPAIQMKDFPGSPGTAGGLALRFTQFGFSLIS) lie on the Cytoplasmic side of the membrane. Transmembrane regions (helical) follow at residues 55-75 (LCIM…FLVA) and 76-96 (TMVF…YALL). The Cytoplasmic portion of the chain corresponds to 97–114 (TQRSFRNPLIVSLFVVGD). The helical transmembrane segment at 115 to 135 (WVTSTMTFAGACAAAGITVLI) threads the bilayer. The Extracellular segment spans residues 136–154 (DNDLEQCGPNHCGRFEAAA). The chain crosses the membrane as a helical span at residues 155 to 175 (AMAFMSWTATTLSFCLSFWLL). The Cytoplasmic portion of the chain corresponds to 176-179 (ASCR).

Belongs to the Casparian strip membrane proteins (CASP) family. As to quaternary structure, homodimer and heterodimers.

Its subcellular location is the cell membrane. This Physcomitrium patens (Spreading-leaved earth moss) protein is CASP-like protein 5A2.